A 158-amino-acid polypeptide reads, in one-letter code: Cyclic pyranopterin monophosphate synthase (158 aa).

Substrate-binding positions include 75–77 and 113–114; these read LCH and ME. D128 is an active-site residue.

Belongs to the MoaC family. As to quaternary structure, homohexamer; trimer of dimers.

It carries out the reaction (8S)-3',8-cyclo-7,8-dihydroguanosine 5'-triphosphate = cyclic pyranopterin phosphate + diphosphate. It functions in the pathway cofactor biosynthesis; molybdopterin biosynthesis. Catalyzes the conversion of (8S)-3',8-cyclo-7,8-dihydroguanosine 5'-triphosphate to cyclic pyranopterin monophosphate (cPMP). This chain is Cyclic pyranopterin monophosphate synthase, found in Roseiflexus sp. (strain RS-1).